The chain runs to 363 residues: Ribosomal RNA large subunit methyltransferase M (363 aa).

S-adenosyl-L-methionine-binding positions include serine 190, 223 to 226 (CPGG), aspartate 242, aspartate 262, and aspartate 279. The Proton acceptor role is filled by lysine 308.

It belongs to the class I-like SAM-binding methyltransferase superfamily. RNA methyltransferase RlmE family. RlmM subfamily. In terms of assembly, monomer.

Its subcellular location is the cytoplasm. The enzyme catalyses cytidine(2498) in 23S rRNA + S-adenosyl-L-methionine = 2'-O-methylcytidine(2498) in 23S rRNA + S-adenosyl-L-homocysteine + H(+). In terms of biological role, catalyzes the 2'-O-methylation at nucleotide C2498 in 23S rRNA. The chain is Ribosomal RNA large subunit methyltransferase M from Vibrio vulnificus (strain CMCP6).